Reading from the N-terminus, the 166-residue chain is Interferon gamma (166 aa).

A signal peptide spans 1-23 (MKYTSYFLALLLCGLLGFSGSYG). Gln24 is modified (pyrrolidone carboxylic acid). Residues Asn39 and Asn106 are each glycosylated (N-linked (GlcNAc...) asparagine).

The protein belongs to the type II (or gamma) interferon family. In terms of assembly, homodimer. Interacts with IFNGR1 (via extracellular domain); this interaction promotes IFNGR1 dimerization. Released primarily from activated T lymphocytes.

The protein resides in the secreted. In terms of biological role, type II interferon produced by immune cells such as T-cells and NK cells that plays crucial roles in antimicrobial, antiviral, and antitumor responses by activating effector immune cells and enhancing antigen presentation. Primarily signals through the JAK-STAT pathway after interaction with its receptor IFNGR1 to affect gene regulation. Upon IFNG binding, IFNGR1 intracellular domain opens out to allow association of downstream signaling components JAK2, JAK1 and STAT1, leading to STAT1 activation, nuclear translocation and transcription of IFNG-regulated genes. Many of the induced genes are transcription factors such as IRF1 that are able to further drive regulation of a next wave of transcription. Plays a role in class I antigen presentation pathway by inducing a replacement of catalytic proteasome subunits with immunoproteasome subunits. In turn, increases the quantity, quality, and repertoire of peptides for class I MHC loading. Increases the efficiency of peptide generation also by inducing the expression of activator PA28 that associates with the proteasome and alters its proteolytic cleavage preference. Up-regulates as well MHC II complexes on the cell surface by promoting expression of several key molecules such as cathepsins B/CTSB, H/CTSH, and L/CTSL. Participates in the regulation of hematopoietic stem cells during development and under homeostatic conditions by affecting their development, quiescence, and differentiation. The chain is Interferon gamma (IFNG) from Bos taurus (Bovine).